The primary structure comprises 200 residues: Mpv17-like protein 2 (200 aa).

Helical transmembrane passes span Ala24–Gly40, Ala63–Leu83, and Val102–Gly122.

The protein belongs to the peroxisomal membrane protein PXMP2/4 family. In terms of assembly, interacts with the large mitochondrial ribosomal subunit.

Its subcellular location is the membrane. The protein localises to the mitochondrion inner membrane. Its function is as follows. Required for the assembly and stability of the mitochondrial ribosome. Is a positive regulator of mitochondrial protein synthesis. The polypeptide is Mpv17-like protein 2 (Mpv17l2) (Mus musculus (Mouse)).